A 296-amino-acid polypeptide reads, in one-letter code: CTD kinase subunit gamma (296 aa).

The tract at residues 25 to 44 is disordered; it reads RDSITSSSTTTPPSSQQKLN. Residues 29–39 show a composition bias toward low complexity; the sequence is TSSSTTTPPSS. Phosphothreonine is present on T35.

The protein belongs to the CTK3 family. In terms of assembly, CTDK-I consists of three subunits, CTK1, CTK2 and CTK3 (also called alpha, beta and gamma). Interacts with CTK1. Heterodimerization with CTK2 is required to protect this subunit from degradation. In terms of processing, ubiquitinated. Ubiquitination leads to degradation by the 26S proteasome pathway.

It localises to the nucleus. It is found in the nucleolus. Its subcellular location is the cytoplasm. In terms of biological role, gamma subunit of the CTDK-I complex, which hyperphosphorylates the C-terminal heptapeptide repeat domain (CTD) of the largest RNA polymerase II subunit. CTDK-I phosphorylates 'Ser-5' if the CTD substrate is not phosphorylated at 'Ser-5', but will phosphorylate 'Ser-2' of a CTD substrate if 'Ser-5' is already phosphorylated. CTDK-I is also more reactive toward substrates that are prephosphorylated at 'Ser-2' or 'Ser-5' compared with an unphosphorylated CTD substrate, therefore efficiently creating doubly phosphorylated CTD repeats. Involved in RNA polymerase I transcription and RNA polymerase II transcriptional elongation, and as part of the CTDK-I complex, pre-mRNA 3'-end processing and SET2 mediated H3K36 methylation. Together with CTK2, required for CTK1 CTD kinase activation. Required for DNA damage induced transcription. Involved in the adaptation to alternative carbon sources, including galactose, glycerol and ethanol, but not raffinose. Required for the integrity of the rDNA locus. The chain is CTD kinase subunit gamma (CTK3) from Saccharomyces cerevisiae (strain ATCC 204508 / S288c) (Baker's yeast).